The primary structure comprises 304 residues: tRNA dimethylallyltransferase (304 aa).

2–9 is an ATP binding site; sequence GPTASGKT. 4–9 provides a ligand contact to substrate; the sequence is TASGKT. 4 interaction with substrate tRNA regions span residues 27–30, 151–155, 232–237, and 265–272; these read DSAL, QRINR, RCVGYR, and KRQITWLR.

It belongs to the IPP transferase family. In terms of assembly, monomer. Requires Mg(2+) as cofactor.

The enzyme catalyses adenosine(37) in tRNA + dimethylallyl diphosphate = N(6)-dimethylallyladenosine(37) in tRNA + diphosphate. Its function is as follows. Catalyzes the transfer of a dimethylallyl group onto the adenine at position 37 in tRNAs that read codons beginning with uridine, leading to the formation of N6-(dimethylallyl)adenosine (i(6)A). The protein is tRNA dimethylallyltransferase of Actinobacillus pleuropneumoniae serotype 5b (strain L20).